We begin with the raw amino-acid sequence, 79 residues long: UPF0175 protein APE_0890a.1 (79 aa).

Belongs to the UPF0175 family.

In Aeropyrum pernix (strain ATCC 700893 / DSM 11879 / JCM 9820 / NBRC 100138 / K1), this protein is UPF0175 protein APE_0890a.1.